The primary structure comprises 288 residues: Protoheme IX farnesyltransferase (288 aa).

Transmembrane regions (helical) follow at residues Val16 to Asn36, Leu37 to Ala57, Ile88 to Phe108, Leu111 to Leu131, Trp138 to Val158, Phe162 to Trp182, Ala210 to Phe230, Val236 to Val256, and Leu265 to Phe285.

It belongs to the UbiA prenyltransferase family. Protoheme IX farnesyltransferase subfamily.

It localises to the cell membrane. The enzyme catalyses heme b + (2E,6E)-farnesyl diphosphate + H2O = Fe(II)-heme o + diphosphate. It functions in the pathway porphyrin-containing compound metabolism; heme O biosynthesis; heme O from protoheme: step 1/1. Functionally, converts heme B (protoheme IX) to heme O by substitution of the vinyl group on carbon 2 of heme B porphyrin ring with a hydroxyethyl farnesyl side group. This is Protoheme IX farnesyltransferase from Thermoplasma acidophilum (strain ATCC 25905 / DSM 1728 / JCM 9062 / NBRC 15155 / AMRC-C165).